The following is a 157-amino-acid chain: Pyruvoyl-dependent arginine decarboxylase 1 (157 aa).

Ser-41 carries the post-translational modification Pyruvic acid (Ser).

The protein belongs to the PdaD family. Requires pyruvate as cofactor.

The catalysed reaction is L-arginine + H(+) = agmatine + CO2. The sequence is that of Pyruvoyl-dependent arginine decarboxylase 1 (pdaD1) from Archaeoglobus fulgidus (strain ATCC 49558 / DSM 4304 / JCM 9628 / NBRC 100126 / VC-16).